A 192-amino-acid chain; its full sequence is Large ribosomal subunit protein uL5 (192 aa).

This sequence belongs to the universal ribosomal protein uL5 family. Part of the 50S ribosomal subunit; part of the 5S rRNA/L5/L18/L25 subcomplex. Contacts the 5S rRNA and the P site tRNA. Forms a bridge to the 30S subunit in the 70S ribosome.

Its function is as follows. This is one of the proteins that bind and probably mediate the attachment of the 5S RNA into the large ribosomal subunit, where it forms part of the central protuberance. In the 70S ribosome it contacts protein S13 of the 30S subunit (bridge B1b), connecting the 2 subunits; this bridge is implicated in subunit movement. Contacts the P site tRNA; the 5S rRNA and some of its associated proteins might help stabilize positioning of ribosome-bound tRNAs. The polypeptide is Large ribosomal subunit protein uL5 (Zymomonas mobilis subsp. mobilis (strain ATCC 31821 / ZM4 / CP4)).